Reading from the N-terminus, the 280-residue chain is Fructose-1,6-bisphosphatase class 1 (280 aa).

Positions 64, 83, 85, and 86 each coordinate Mg(2+). Substrate contacts are provided by residues 86–89 (DGSS), Tyr-189, and Lys-220. Residue Glu-226 coordinates Mg(2+).

It belongs to the FBPase class 1 family. Homotetramer. Mg(2+) is required as a cofactor.

Its subcellular location is the cytoplasm. The catalysed reaction is beta-D-fructose 1,6-bisphosphate + H2O = beta-D-fructose 6-phosphate + phosphate. The protein operates within carbohydrate biosynthesis; gluconeogenesis. This is Fructose-1,6-bisphosphatase class 1 from Campylobacter jejuni subsp. jejuni serotype O:2 (strain ATCC 700819 / NCTC 11168).